The chain runs to 465 residues: Light-independent protochlorophyllide reductase subunit N (465 aa).

Residues Cys22, Cys47, and Cys107 each contribute to the [4Fe-4S] cluster site.

This sequence belongs to the BchN/ChlN family. Protochlorophyllide reductase is composed of three subunits; ChlL, ChlN and ChlB. Forms a heterotetramer of two ChlB and two ChlN subunits. [4Fe-4S] cluster serves as cofactor.

The protein localises to the plastid. Its subcellular location is the chloroplast. It carries out the reaction chlorophyllide a + oxidized 2[4Fe-4S]-[ferredoxin] + 2 ADP + 2 phosphate = protochlorophyllide a + reduced 2[4Fe-4S]-[ferredoxin] + 2 ATP + 2 H2O. It participates in porphyrin-containing compound metabolism; chlorophyll biosynthesis (light-independent). Component of the dark-operative protochlorophyllide reductase (DPOR) that uses Mg-ATP and reduced ferredoxin to reduce ring D of protochlorophyllide (Pchlide) to form chlorophyllide a (Chlide). This reaction is light-independent. The NB-protein (ChlN-ChlB) is the catalytic component of the complex. The chain is Light-independent protochlorophyllide reductase subunit N from Marchantia polymorpha (Common liverwort).